The following is a 322-amino-acid chain: Pantothenate kinase (322 aa).

Residue Gly100–Ser107 participates in ATP binding.

It belongs to the prokaryotic pantothenate kinase family.

It localises to the cytoplasm. It carries out the reaction (R)-pantothenate + ATP = (R)-4'-phosphopantothenate + ADP + H(+). It functions in the pathway cofactor biosynthesis; coenzyme A biosynthesis; CoA from (R)-pantothenate: step 1/5. The polypeptide is Pantothenate kinase (Agrobacterium fabrum (strain C58 / ATCC 33970) (Agrobacterium tumefaciens (strain C58))).